Consider the following 86-residue polypeptide: BolA-like protein 2 (86 aa).

At Met-1 the chain carries N-acetylmethionine.

This sequence belongs to the BolA/IbaG family. Interacts with GLRX3; forms a heterotrimeric complex composed by two BOLA2 molecules and one GLRX3 molecule; linked by [2Fe-2S] clusters.

The protein resides in the cytoplasm. It is found in the nucleus. Functionally, acts as a cytosolic iron-sulfur (Fe-S) cluster assembly factor that facilitates [2Fe-2S] cluster insertion into a subset of cytosolic proteins. Acts together with the monothiol glutaredoxin GLRX3. In Homo sapiens (Human), this protein is BolA-like protein 2 (BOLA2).